Here is a 439-residue protein sequence, read N- to C-terminus: D-erythronate kinase (439 aa).

Residues serine 253, glycine 366 to valine 369, and glycine 412 each bind ATP.

This sequence belongs to the four-carbon acid sugar kinase family.

It carries out the reaction D-erythronate + ATP = 4-phospho-D-erythronate + ADP + H(+). Functionally, catalyzes the ATP-dependent phosphorylation of D-erythronate to D-erythronate 4-phosphate. Can also phosphorylate D-threonate and 4-hydroxy-L-threonine, with lower efficiency. The chain is D-erythronate kinase from Heliobacterium modesticaldum (strain ATCC 51547 / Ice1).